Here is a 628-residue protein sequence, read N- to C-terminus: Venom redulysin 1 (628 aa).

Residues 1–19 (MSKLWLLLLLVAAFQAVHS) form the signal peptide. The propeptide occupies 20-368 (YPAAESDYLE…EDDVAESDEE (349 aa)). Residues 290–313 (DYEEEEEEEEEEEFELEEDYEEDP) form a disordered region. The span at 291–313 (YEEEEEEEEEEEFELEEDYEEDP) shows a compositional bias: acidic residues.

It belongs to the redulysin-like family. In terms of processing, contains 5 disulfide bonds. Expressed by the venom gland (posterior main gland) (at protein level).

The protein localises to the secreted. Functionally, highly abundant protein that may be responsible for the observed disruption of sensory neuron membranes, since it is homologous to proteins such as trialysin, which forms pores in lipid bilayers. Probable insecticidal toxin. In Platymeris rhadamanthus (Red spot assassin bug), this protein is Venom redulysin 1.